A 347-amino-acid chain; its full sequence is Protein RecA (347 aa).

An ATP-binding site is contributed by 67 to 74; the sequence is GPESSGKT.

The protein belongs to the RecA family.

It localises to the cytoplasm. Can catalyze the hydrolysis of ATP in the presence of single-stranded DNA, the ATP-dependent uptake of single-stranded DNA by duplex DNA, and the ATP-dependent hybridization of homologous single-stranded DNAs. It interacts with LexA causing its activation and leading to its autocatalytic cleavage. This Helicobacter acinonychis (strain Sheeba) protein is Protein RecA.